Consider the following 534-residue polypeptide: CTP synthase (534 aa).

Positions 1–265 are amidoligase domain; the sequence is MKYIIVTGGV…TTQLMKHLQL (265 aa). Residue serine 12 participates in CTP binding. Residue serine 12 participates in UTP binding. 13 to 18 provides a ligand contact to ATP; the sequence is GLGKGI. Tyrosine 53 is a binding site for L-glutamine. Aspartate 70 is an ATP binding site. 2 residues coordinate Mg(2+): aspartate 70 and glutamate 140. Residues 147 to 149, 186 to 191, and lysine 222 each bind CTP; these read DIE and KTKPSQ. UTP-binding positions include 186–191 and lysine 222; that span reads KTKPSQ. One can recognise a Glutamine amidotransferase type-1 domain in the interval 289–530; it reads KLAIVGKYTN…VAAMCKYRKE (242 aa). Glycine 352 provides a ligand contact to L-glutamine. Cysteine 379 acts as the Nucleophile; for glutamine hydrolysis in catalysis. L-glutamine contacts are provided by residues 380-383, glutamate 403, and arginine 460; that span reads LGMQ. Active-site residues include histidine 503 and glutamate 505.

It belongs to the CTP synthase family. In terms of assembly, homotetramer.

It catalyses the reaction UTP + L-glutamine + ATP + H2O = CTP + L-glutamate + ADP + phosphate + 2 H(+). It carries out the reaction L-glutamine + H2O = L-glutamate + NH4(+). The enzyme catalyses UTP + NH4(+) + ATP = CTP + ADP + phosphate + 2 H(+). The protein operates within pyrimidine metabolism; CTP biosynthesis via de novo pathway; CTP from UDP: step 2/2. Allosterically activated by GTP, when glutamine is the substrate; GTP has no effect on the reaction when ammonia is the substrate. The allosteric effector GTP functions by stabilizing the protein conformation that binds the tetrahedral intermediate(s) formed during glutamine hydrolysis. Inhibited by the product CTP, via allosteric rather than competitive inhibition. Functionally, catalyzes the ATP-dependent amination of UTP to CTP with either L-glutamine or ammonia as the source of nitrogen. Regulates intracellular CTP levels through interactions with the four ribonucleotide triphosphates. The chain is CTP synthase from Methanosarcina barkeri (strain Fusaro / DSM 804).